The following is a 36-amino-acid chain: Photosystem I reaction center subunit VIII (36 aa).

Residues 8–28 (SFFVPLVCLVFPAIAMAFLFV) traverse the membrane as a helical segment.

It belongs to the PsaI family.

It is found in the plastid. It localises to the chloroplast thylakoid membrane. Functionally, may help in the organization of the PsaL subunit. The polypeptide is Photosystem I reaction center subunit VIII (Chara vulgaris (Common stonewort)).